The sequence spans 315 residues: Tetraacyldisaccharide 4'-kinase (315 aa).

Residue 45 to 52 (SVGGSGKT) participates in ATP binding.

The protein belongs to the LpxK family.

The catalysed reaction is a lipid A disaccharide + ATP = a lipid IVA + ADP + H(+). The protein operates within glycolipid biosynthesis; lipid IV(A) biosynthesis; lipid IV(A) from (3R)-3-hydroxytetradecanoyl-[acyl-carrier-protein] and UDP-N-acetyl-alpha-D-glucosamine: step 6/6. Functionally, transfers the gamma-phosphate of ATP to the 4'-position of a tetraacyldisaccharide 1-phosphate intermediate (termed DS-1-P) to form tetraacyldisaccharide 1,4'-bis-phosphate (lipid IVA). The chain is Tetraacyldisaccharide 4'-kinase from Aquifex aeolicus (strain VF5).